The following is a 1047-amino-acid chain: MVDLQEKQCTIVKRNGMFVPFDRNRIFQALEAAFRDTRRIDDHMPLPEDLENSIRSITHQVVKEVVQKITDGQVVTVERIQDMVESQLYINGLQDVARDYVVYRDDRKAHREKSWQSLSVIRRCGTTVHFNPMKISAALEKAFRATDRIEGMTPDFVREEVNALTQKIVAEIEERCSQQDSRIDIEQIQDIVEQQLMVVGHYATAKNYILYREARARVRDNRVEDQIVEEAPSEETFEVLSKDGSTYMITHSQLLARLARACSRFPETTDAALLTDMAFSNFYSGIKESEVVLACIMAARANIEKEPDYAFVAAELLLDVVYKEALDRSRGDEDLEQVYRDHFKRYIMEGDSYRLNPELKNLFDLDALANAMDLSRDLQFSYMGIQNLYDRYFNHDDGRRLETPQIFWMRVAMGLALKEQDKTYWAITFYNLLSTFRYTPATPTLFNSGMRHSQLSSCYLSTVQDDLVNIYKVISDNAMLSKWAGGIGNDWTAIRATGALIKGTNGKSQGVIPFIKVTNDTAVAVNQGGKRKGAVCVYLEVWHLDYEDFLELRKNTGDDRRRAHDVNTASWIPDLFFKRLQQKGSWTLFSPDDVPGLHDAYGEEFERLYEEYERKVDSGEIRLYKKVEAEDLWRKMLSMLFETGHPWMTFKDPSNIRSAQDHTGVVRCSNLCTEILLNCSETETAVCNLGSVNLVQHILDDGLDEEKLSETISIAVRMLDNVIDINFYPTKEAKEANFAHRAIGLGVMGFQDALYKLDISYASQEAVEFADYSSELISYYAIQASCLLAKERGTYSSYKGSKWDRGLLPIDTIQLLANYRGKDNLQMDTSVRKDWEPIRSLIREHGMRNCQLMAIAPTATISNIIGVTQSIEPTYKHLFVKSNLSGEFTIPNVYLIEKLKKLGIWDADMLDDLKYFDGSLLEIERVPDHIKHIFLTAFEIEPEWILECASRRQKWIDMGQSLNLYLAQPDGKKLSNMYLTAWKKGLKTTYYLRSSSATTVEKSFVDINKRGIQPRWMKNKSASAGIVVERASKTPVCSLEEGCEVCQ.

ATP-cone domains are found at residues 9–111, 118–219, and 237–327; these read CTIV…KAHR, LSVI…ARVR, and FEVL…EALD. Substrate is bound by residues T442, 457 to 458, G486, 670 to 674, and 857 to 861; these read SC, NLCTE, and PTATI. The cysteines at positions 458 and 687 are disulfide-linked. The active-site Proton acceptor is N670. Catalysis depends on C672, which acts as the Cysteine radical intermediate. The Proton acceptor role is filled by E674.

The protein belongs to the ribonucleoside diphosphate reductase large chain family. Tetramer of two alpha and two beta subunits.

The catalysed reaction is a 2'-deoxyribonucleoside 5'-diphosphate + [thioredoxin]-disulfide + H2O = a ribonucleoside 5'-diphosphate + [thioredoxin]-dithiol. With respect to regulation, under complex allosteric control mediated by deoxynucleoside triphosphates and ATP binding. The type of nucleotide bound at the specificity site determines substrate preference. It seems probable that ATP makes the enzyme reduce CDP and UDP, dGTP favors ADP reduction and dTTP favors GDP reduction. Provides the precursors necessary for DNA synthesis. Catalyzes the biosynthesis of deoxyribonucleotides from the corresponding ribonucleotides. In Chlamydia muridarum (strain MoPn / Nigg), this protein is Ribonucleoside-diphosphate reductase subunit alpha (nrdA).